Here is a 367-residue protein sequence, read N- to C-terminus: 3-dehydroquinate synthase (367 aa).

NAD(+) contacts are provided by residues 69–74 (DGEAFK), 103–107 (GVIGD), 127–128 (TT), Lys140, and Lys149. The Zn(2+) site is built by Glu182, His245, and His262.

The protein belongs to the sugar phosphate cyclases superfamily. Dehydroquinate synthase family. Requires Co(2+) as cofactor. The cofactor is Zn(2+). NAD(+) serves as cofactor.

It is found in the cytoplasm. The enzyme catalyses 7-phospho-2-dehydro-3-deoxy-D-arabino-heptonate = 3-dehydroquinate + phosphate. It participates in metabolic intermediate biosynthesis; chorismate biosynthesis; chorismate from D-erythrose 4-phosphate and phosphoenolpyruvate: step 2/7. Catalyzes the conversion of 3-deoxy-D-arabino-heptulosonate 7-phosphate (DAHP) to dehydroquinate (DHQ). The sequence is that of 3-dehydroquinate synthase from Pseudomonas syringae pv. syringae (strain B728a).